Here is a 598-residue protein sequence, read N- to C-terminus: Terpenoid synthase 1 (598 aa).

Mg(2+)-binding residues include Asp362, Asp366, Asn494, and Asp502. The DDXXD motif signature appears at 362–366 (DDTCD).

The protein belongs to the terpene synthase family. Tpsa subfamily. Mg(2+) is required as a cofactor. Mn(2+) serves as cofactor. In terms of tissue distribution, expressed exclusively in siliques.

The protein resides in the cytoplasm. The protein operates within secondary metabolite biosynthesis; terpenoid biosynthesis. This is Terpenoid synthase 1 (TPS01) from Arabidopsis thaliana (Mouse-ear cress).